Reading from the N-terminus, the 307-residue chain is Pseudouridine-5'-phosphate glycosidase (307 aa).

The active-site Proton donor is the Glu-25. Substrate is bound by residues Lys-86 and Val-106. Mn(2+) is bound at residue Asp-138. 140-142 provides a ligand contact to substrate; the sequence is SAD. The active-site Nucleophile is the Lys-159.

Belongs to the pseudouridine-5'-phosphate glycosidase family. In terms of assembly, homotrimer. Requires Mn(2+) as cofactor.

It carries out the reaction D-ribose 5-phosphate + uracil = psi-UMP + H2O. In terms of biological role, catalyzes the reversible cleavage of pseudouridine 5'-phosphate (PsiMP) to ribose 5-phosphate and uracil. Functions biologically in the cleavage direction, as part of a pseudouridine degradation pathway. The polypeptide is Pseudouridine-5'-phosphate glycosidase (Caldanaerobacter subterraneus subsp. tengcongensis (strain DSM 15242 / JCM 11007 / NBRC 100824 / MB4) (Thermoanaerobacter tengcongensis)).